Consider the following 483-residue polypeptide: UDP-N-acetylmuramoyl-L-alanyl-D-glutamate--2,6-diaminopimelate ligase (483 aa).

Serine 29 is a binding site for UDP-N-acetyl-alpha-D-muramoyl-L-alanyl-D-glutamate. Residue 112-118 (GTNGKTT) coordinates ATP. Residues 154-155 (TT), serine 181, and arginine 189 each bind UDP-N-acetyl-alpha-D-muramoyl-L-alanyl-D-glutamate. Position 221 is an N6-carboxylysine (lysine 221). Residues arginine 380, 404–407 (DNPR), glycine 454, and glutamate 458 contribute to the meso-2,6-diaminopimelate site. The short motif at 404 to 407 (DNPR) is the Meso-diaminopimelate recognition motif element.

This sequence belongs to the MurCDEF family. MurE subfamily. The cofactor is Mg(2+). Carboxylation is probably crucial for Mg(2+) binding and, consequently, for the gamma-phosphate positioning of ATP.

The protein resides in the cytoplasm. It catalyses the reaction UDP-N-acetyl-alpha-D-muramoyl-L-alanyl-D-glutamate + meso-2,6-diaminopimelate + ATP = UDP-N-acetyl-alpha-D-muramoyl-L-alanyl-gamma-D-glutamyl-meso-2,6-diaminopimelate + ADP + phosphate + H(+). Its pathway is cell wall biogenesis; peptidoglycan biosynthesis. In terms of biological role, catalyzes the addition of meso-diaminopimelic acid to the nucleotide precursor UDP-N-acetylmuramoyl-L-alanyl-D-glutamate (UMAG) in the biosynthesis of bacterial cell-wall peptidoglycan. In Clostridium botulinum (strain ATCC 19397 / Type A), this protein is UDP-N-acetylmuramoyl-L-alanyl-D-glutamate--2,6-diaminopimelate ligase.